A 4427-amino-acid polypeptide reads, in one-letter code: Dynein axonemal heavy chain 2 (4427 aa).

The disordered stretch occupies residues 1–73 (MSSKAEKKQR…AQSEESVEPE (73 aa)). The segment at 1–1764 (MSSKAEKKQR…VIRQTNTQFQ (1764 aa)) is stem. The segment covering 14–23 (RGSSQASWSG) has biased composition (polar residues). Residues 50 to 59 (LPKEEPEPRL) show a composition bias toward basic and acidic residues. A TPR 1 repeat occupies 1404–1439 (EDNQVALSTMKASRFVKAFEKDVDHWERCLSLILEV). AAA stretches follow at residues 1765 to 1986 (YNYE…LLRY), 2046 to 2273 (ETVE…DNCK), 2378 to 2625 (RYPP…VFQG), and 2722 to 2974 (EYNL…LRRH). Residues 1803 to 1810 (GPAGTGKT), 2084 to 2091 (GCTGSGKT), and 2416 to 2423 (GPVGTGKT) contribute to the ATP site. A TPR 2 repeat occupies 2721-2754 (NEYNLSPSVVPMQLVLFREAIEHITRIVRVIGQP). An ATP-binding site is contributed by 2762–2769 (GIGGSGRQ). The segment at 2989-3272 (YKKLLGEKRQ…EELRKKSEEM (284 aa)) is stalk. Residues 3012–3049 (FKIDETREKVQVMSLELEDAKKKVAEFQKQCEEYLVII) are a coiled coil. One copy of the TPR 3 repeat lies at 3072–3105 (VEEIKCQALADNAQKDLEEALPALEEAMRALESL). Coiled-coil stretches lie at residues 3216–3304 (KRIR…EEDL) and 3523–3567 (VRKE…GSLL). AAA stretches follow at residues 3358-3588 (LCNP…EVTE) and 3804-4023 (VTSF…LLSL). TPR repeat units follow at residues 4072 to 4104 (STPFHRLSALETYFIPKDGSLASYKEYISLLPG) and 4105 to 4140 (MDPPEAFGQHPNADVASQITEAQTLFDTLLSLQPQI).

The protein belongs to the dynein heavy chain family. As to quaternary structure, part of the axonemal inner dynein arm complex that consists of at least two heavy chains and a number of intermediate and light chains. Interacts with DNAI4. In terms of tissue distribution, expressed primarily in trachea and testis, 2 tissues containing axonemal structures. Also expressed in lung. Expressed in spermatozoa (at protein level).

The protein localises to the cytoplasm. The protein resides in the cytoskeleton. It localises to the cilium axoneme. It is found in the flagellum axoneme. Its function is as follows. As part of the axonemal inner dynein arm complex plays a central role in ciliary beat. Expressed in sperm flagellum, it is required for sperm motility. Dyneins are microtubule-based molecular motors possessing ATPase activities that can convert the chemical energy of ATP into relative sliding between adjacent microtubule doublets to generate ciliary bending. The chain is Dynein axonemal heavy chain 2 from Homo sapiens (Human).